The sequence spans 427 residues: 3-phosphoshikimate 1-carboxyvinyltransferase (427 aa).

3 residues coordinate 3-phosphoshikimate: lysine 20, serine 21, and arginine 25. Lysine 20 contacts phosphoenolpyruvate. Residues glycine 92 and arginine 120 each coordinate phosphoenolpyruvate. 4 residues coordinate 3-phosphoshikimate: serine 166, glutamine 168, aspartate 312, and lysine 339. Glutamine 168 provides a ligand contact to phosphoenolpyruvate. Aspartate 312 functions as the Proton acceptor in the catalytic mechanism. The phosphoenolpyruvate site is built by arginine 343 and arginine 385.

This sequence belongs to the EPSP synthase family. As to quaternary structure, monomer.

It localises to the cytoplasm. It catalyses the reaction 3-phosphoshikimate + phosphoenolpyruvate = 5-O-(1-carboxyvinyl)-3-phosphoshikimate + phosphate. It functions in the pathway metabolic intermediate biosynthesis; chorismate biosynthesis; chorismate from D-erythrose 4-phosphate and phosphoenolpyruvate: step 6/7. In terms of biological role, catalyzes the transfer of the enolpyruvyl moiety of phosphoenolpyruvate (PEP) to the 5-hydroxyl of shikimate-3-phosphate (S3P) to produce enolpyruvyl shikimate-3-phosphate and inorganic phosphate. In Streptococcus thermophilus (strain ATCC BAA-250 / LMG 18311), this protein is 3-phosphoshikimate 1-carboxyvinyltransferase.